The following is a 150-amino-acid chain: 3-dehydroquinate dehydratase (150 aa).

Y26 acts as the Proton acceptor in catalysis. N77, H83, and D90 together coordinate substrate. The active-site Proton donor is the H103. Substrate contacts are provided by residues 104-105 (LS) and R114.

The protein belongs to the type-II 3-dehydroquinase family. Homododecamer.

It carries out the reaction 3-dehydroquinate = 3-dehydroshikimate + H2O. Its pathway is metabolic intermediate biosynthesis; chorismate biosynthesis; chorismate from D-erythrose 4-phosphate and phosphoenolpyruvate: step 3/7. Its function is as follows. Catalyzes a trans-dehydration via an enolate intermediate. In Sodalis glossinidius (strain morsitans), this protein is 3-dehydroquinate dehydratase.